A 163-amino-acid polypeptide reads, in one-letter code: Urease accessory protein UreE (163 aa).

The protein belongs to the UreE family.

The protein localises to the cytoplasm. Its function is as follows. Involved in urease metallocenter assembly. Binds nickel. Probably functions as a nickel donor during metallocenter assembly. This is Urease accessory protein UreE from Actinomyces naeslundii.